Reading from the N-terminus, the 430-residue chain is NADH-quinone oxidoreductase subunit D 1 (430 aa).

The disordered stretch occupies residues 1-36 (MSEAKGVGGIDPRATPGSAGAGERPPMGTVSRAGDG).

The protein belongs to the complex I 49 kDa subunit family. NDH-1 is composed of 14 different subunits. Subunits NuoB, C, D, E, F, and G constitute the peripheral sector of the complex.

It is found in the cell inner membrane. The enzyme catalyses a quinone + NADH + 5 H(+)(in) = a quinol + NAD(+) + 4 H(+)(out). Its function is as follows. NDH-1 shuttles electrons from NADH, via FMN and iron-sulfur (Fe-S) centers, to quinones in the respiratory chain. The immediate electron acceptor for the enzyme in this species is believed to be ubiquinone. Couples the redox reaction to proton translocation (for every two electrons transferred, four hydrogen ions are translocated across the cytoplasmic membrane), and thus conserves the redox energy in a proton gradient. In Anaeromyxobacter dehalogenans (strain 2CP-C), this protein is NADH-quinone oxidoreductase subunit D 1.